We begin with the raw amino-acid sequence, 1002 residues long: Glutamate receptor ionotropic, NMDA 3B (1002 aa).

Positions 1–24 (MESVRTLWLSVALALAVGSRVVRG) are cleaved as a signal peptide. The Extracellular segment spans residues 25–574 (HPQPCRVPTR…PIGAFMWPLH (550 aa)). N-linked (GlcNAc...) asparagine glycosylation is found at asparagine 69, asparagine 212, asparagine 344, asparagine 451, and asparagine 465. 2 cysteine pairs are disulfide-bonded: cysteine 439/cysteine 475 and cysteine 445/cysteine 476. Positions 531, 533, and 538 each coordinate glycine. Positions 533 and 538 each coordinate D-serine. The chain crosses the membrane as a helical span at residues 575-594 (WSMWVGVFAALHLTALFLTL). Residues 595–615 (YEWRSPYGLTPRGRNRGTVFS) are Cytoplasmic-facing. Positions 616-627 (YSSALNLCYAIL) form an intramembrane region, discontinuously helical. Residues 628–641 (FGRTVSSKTPKCPT) lie on the Cytoplasmic side of the membrane. The helical transmembrane segment at 642 to 661 (GRFLMNLWAIFCLLVLSSYT) threads the bilayer. The Extracellular portion of the chain corresponds to 662 to 832 (ANLAAVMVGD…TLQMGVYHFS (171 aa)). Serine 701 provides a ligand contact to glycine. Serine 701, alanine 702, and aspartate 745 together coordinate D-serine. Aspartate 745 is a glycine binding site. The N-linked (GlcNAc...) asparagine glycan is linked to asparagine 786. The helical transmembrane segment at 833-848 (GLFVLLCLGLGSALLT) threads the bilayer. The Cytoplasmic portion of the chain corresponds to 849 to 1002 (SLGEHVFYRL…RLLHAAPAES (154 aa)). The tract at residues 882 to 910 (ALNTGPPEGQQERAEQERSGPKDELPATD) is disordered. Over residues 891-906 (QQERAEQERSGPKDEL) the composition is skewed to basic and acidic residues. The stretch at 944–985 (LCSNGPGLQAELRELELRIEAARERLRSALLRRGELRALLGD) forms a coiled coil. The involved in the trafficking and surface expression of NMDARs stretch occupies residues 951–984 (LQAELRELELRIEAARERLRSALLRRGELRALLG).

This sequence belongs to the glutamate-gated ion channel (TC 1.A.10.1) family. NR3B/GRIN3B subfamily. As to quaternary structure, forms heterotetrameric channels that contain at least two GluN1 subunits and at least a combination of one GluN2 and one GluN3 subunits (in vitro). Forms heterotetrameric channels composed of two GluN1/zeta subunits (GRIN1), and two identical GluN3 subunits (GRIN3A or GRIN3B) (in vitro). Does not form functional homomeric channels. In terms of tissue distribution, expressed in the hippocampus, the corpus callosum, in the facial and trigeminal nuclei of the brainstem and the ventral horn of the spinal cord.

It is found in the cell membrane. The protein localises to the postsynaptic cell membrane. The catalysed reaction is Ca(2+)(in) = Ca(2+)(out). It carries out the reaction Na(+)(in) = Na(+)(out). Excitatory glycine receptors are inhibited by D-serine at a concentrion of 100uM. Functionally, component of a non-conventional N-methyl-D-aspartate (NMDA) receptors (NMDARs) that function as heterotetrameric, ligand-gated cation channels with low calcium permeability and low voltage-dependent block by Mg(2+). Forms glutamatergic receptor complexes with GluN1 and GluN2 subunits which are activated by glycine binding to the GluN1 and GluN3 subunits and L-glutamate binding to GluN2 subunits. Forms excitatory glycinergic receptor complexes with GluN1 alone which are activated by glycine binding to the GluN1 and GluN3 subunits. GluN3B subunit also binds D-serine and, in the absence of glycine, activates glycinergic receptor complexes, but with lower efficacy than glycine. Each GluN3 subunit confers differential attributes to channel properties, including activation, deactivation and desensitization kinetics, pH sensitivity, Ca2(+) permeability, and binding to allosteric modulators. This chain is Glutamate receptor ionotropic, NMDA 3B, found in Rattus norvegicus (Rat).